Here is a 679-residue protein sequence, read N- to C-terminus: MISASRAVAARLVGAAASRGPTAARHQDGWNGLSHEAFRIVSRRDYASEAIKGAVVGIDLGTTNSCVAVMEGKQAKVLENAEGARTTPSVVAFTADGERLVGMPAKRQAVTNPNNTFYATKRLIGRRYDDPEVQKDIKNVPFKIVRASNGDAWVEAHGKLYSPSQIGAFVLMKMKETAENYLGHTAKNAVITVPAYFNDSQRQATKDAGQISGLNVLRVINEPTAAALAYGLDKSEDKVIAVYDLGGGTFDISILEIQKGVFEVKSTNGDTFLGGEDFDQALLRHIVKEFKRETGVDLTKDNMALQRVREAAEKAKCELSSSVQTDINLPYLTMDSSGPKHLNMKLSRAQFEGIVTDLIRRTIAPCQKAMQDAEVSKSDIGEVILVGGMTRMPKVQQTVQDLFGRAPSKAVNPDEAVAIGAAIQGGVLAGDVTDVLLLDVTPLSLGIETLGGVFTKLINRNTTIPTKKSQVFSTAADGQTQVEIKVCQGEREMAGDNKLLGQFTLIGIPPAPRGVPQIEVTFDIDANGIVHVSAKDKGTGREQQIVIQSSGGLSKDDIENMVKNAEKYAEEDRRKKERVEAVNMAEGIIHDTETKMEEFKDQLPADECNKLKEEISKMRELLARKDSETGENIRQAASSLQQASLKLFEMAYKKMASEREGSGSSGTGEQKEDQKEEKQ.

Residues 1 to 46 constitute a mitochondrion transit peptide; sequence MISASRAVAARLVGAAASRGPTAARHQDGWNGLSHEAFRIVSRRDY. Residues 1–432 are interaction with NFS1; the sequence is MISASRAVAA…IQGGVLAGDV (432 aa). ADP-binding residues include Thr-63 and Asn-64. The interval 63 to 431 is nucleotide-binding domain (NBD); sequence TNSCVAVMEG…AIQGGVLAGD (369 aa). Lys-76 is subject to N6-acetyllysine. Thr-87 is modified (phosphothreonine). Lys-135 and Lys-138 each carry N6-acetyllysine; alternate. N6-succinyllysine; alternate occurs at positions 135 and 138. Lys-143 bears the N6-acetyllysine mark. The residue at position 206 (Lys-206) is an N6-acetyllysine; alternate. Lys-206 is modified (N6-succinyllysine; alternate). At Lys-206 the chain carries N6-malonyllysine; alternate. Residues Lys-234 and Lys-288 each carry the N6-acetyllysine modification. Lys-300 bears the N6-acetyllysine; alternate mark. Lys-300 bears the N6-succinyllysine; alternate mark. ADP contacts are provided by Glu-313, Lys-316, and Ser-320. Lys-368 carries the N6-succinyllysine modification. Residues Gly-388 and Arg-391 each contribute to the ADP site. Lys-394 bears the N6-succinyllysine mark. Ser-408 carries the phosphoserine modification. Residues 432–441 form an interdomain linker region; the sequence is VTDVLLLDVT. The tract at residues 432 to 679 is interaction with FXN and ISCU; that stretch reads VTDVLLLDVT…QKEDQKEEKQ (248 aa). The substrate-binding domain (SBD) stretch occupies residues 442–679; it reads PLSLGIETLG…QKEDQKEEKQ (238 aa). Arg-513 carries the omega-N-methylarginine modification. 2 positions are modified to N6-acetyllysine; alternate: Lys-567 and Lys-600. Residues Lys-567 and Lys-600 each carry the N6-succinyllysine; alternate modification. Lys-610 is subject to N6-succinyllysine. Residue Lys-612 is modified to N6-acetyllysine. Lys-646 carries the post-translational modification N6-acetyllysine; alternate. Position 646 is an N6-succinyllysine; alternate (Lys-646). Residues 656 to 679 are disordered; sequence ASEREGSGSSGTGEQKEDQKEEKQ. Residues 669-679 are compositionally biased toward basic and acidic residues; it reads EQKEDQKEEKQ.

It belongs to the heat shock protein 70 family. As to quaternary structure, interacts strongly with the intermediate form of FXN and weakly with its mature form. Interacts with HSCB. Associates with the mitochondrial contact site and cristae organizing system (MICOS) complex, composed of at least MICOS10/MIC10, CHCHD3/MIC19, CHCHD6/MIC25, APOOL/MIC27, IMMT/MIC60, APOO/MIC23/MIC26 and QIL1/MIC13. This complex was also known under the names MINOS or MitOS complex. The MICOS complex associates with mitochondrial outer membrane proteins SAMM50, MTX1, MTX2 and DNAJC11, mitochondrial inner membrane protein TMEM11 and with HSPA9. Interacts with DNLZ, the interaction is required to prevent self-aggregation. Interacts with TESPA1. Interacts with PDPN. Interacts with NFU1, NFS1 and ISCU. Interacts with TP53; the interaction promotes TP53 degradation. Interacts (via SBD domain) with UBXN2A; the interaction with UBXN2A inhibits HSPA9/MOT-2 interaction with and degradation of TP53, thereby promotes TP53 translocation to the nucleus. Interacts with ITPR1 AND VDAC1; this interaction couples ITPR1 to VDAC1. Component of the TIM23 mitochondrial inner membrane pre-sequence translocase complex.

The protein resides in the mitochondrion. It is found in the nucleus. It localises to the nucleolus. Its subcellular location is the cytoplasm. The protein localises to the mitochondrion matrix. The catalysed reaction is ATP + H2O = ADP + phosphate + H(+). The chaperone activity is regulated by ATP-induced allosteric coupling of the nucleotide-binding (NBD) and substrate-binding (SBD) domains. ATP binding in the nucleotide-binding pocket (NBP) leads to a conformational change in the NBD, which is transferred through the interdomain linker (IDL) to the substrate-binding domain (SBD). This elicits a reduced substrate affinity and a faster substrate exchange rate. Upon hydrolysis of ATP to ADP, the protein undergoes a conformational change that increases its affinity for substrate proteins. It cycles through repeated phases of ATP hydrolysis and nucleotide exchange, facilitating repeated cycles of substrate binding and release. Functions in collaboration with co-chaperones. Functions with the co-chaperone, DNLZ, to maintain solubility and regulate ATP hydrolysis. Nucleotide exchange factors, GRPEL1 and GRPEL2, accelerate nucleotide exchange. Mitochondrial chaperone that plays a key role in mitochondrial protein import, folding, and assembly. Plays an essential role in the protein quality control system, the correct folding of proteins, the re-folding of misfolded proteins, and the targeting of proteins for subsequent degradation. These processes are achieved through cycles of ATP binding, ATP hydrolysis, and ADP release, mediated by co-chaperones. In mitochondria, it associates with the TIM (translocase of the inner membrane) protein complex to assist in the import and folding of mitochondrial proteins. Plays an important role in mitochondrial iron-sulfur cluster (ISC) biogenesis, interacts with and stabilizes ISC cluster assembly proteins FXN, NFU1, NFS1 and ISCU. Regulates erythropoiesis via stabilization of ISC assembly. Regulates mitochondrial calcium-dependent apoptosis by coupling two calcium channels, ITPR1 and VDAC1, at the mitochondria-associated endoplasmic reticulum (ER) membrane to facilitate calcium transport from the ER lumen to the mitochondria intermembrane space, providing calcium for the downstream calcium channel MCU, which releases it into the mitochondrial matrix. Although primarily located in the mitochondria, it is also found in other cellular compartments. In the cytosol, it associates with proteins involved in signaling, apoptosis, or senescence. It may play a role in cell cycle regulation via its interaction with and promotion of degradation of TP53. May play a role in the control of cell proliferation and cellular aging. Protects against reactive oxygen species (ROS). Extracellular HSPA9 plays a cytoprotective role by preventing cell lysis following immune attack by the membrane attack complex by disrupting formation of the complex. This chain is Stress-70 protein, mitochondrial, found in Pongo abelii (Sumatran orangutan).